A 401-amino-acid chain; its full sequence is Heat shock transcription factor, Y-linked (401 aa).

Positions 1–11 (MAHVSSETQDV) are enriched in polar residues. Residues 1 to 30 (MAHVSSETQDVSPKDELTASEASTRSPLCE) form a disordered region. The DNA-binding element occupies 76–194 (LSLNFPRKLW…PQLLVRVKRR (119 aa)).

It belongs to the HSF family. In terms of tissue distribution, testis-specific. Present in Sertoli cells and spermatogenic cells (at protein level).

It localises to the nucleus. Its subcellular location is the cytoplasm. The sequence is that of Heat shock transcription factor, Y-linked (HSFY1) from Homo sapiens (Human).